A 209-amino-acid polypeptide reads, in one-letter code: Large ribosomal subunit protein uL3 (209 aa).

The tract at residues 128-152 (QARGPMSHGSRYHRRPGSMGPVDPN) is disordered.

It belongs to the universal ribosomal protein uL3 family. Part of the 50S ribosomal subunit. Forms a cluster with proteins L14 and L19.

Functionally, one of the primary rRNA binding proteins, it binds directly near the 3'-end of the 23S rRNA, where it nucleates assembly of the 50S subunit. The chain is Large ribosomal subunit protein uL3 from Halalkalibacterium halodurans (strain ATCC BAA-125 / DSM 18197 / FERM 7344 / JCM 9153 / C-125) (Bacillus halodurans).